We begin with the raw amino-acid sequence, 693 residues long: DNA-directed RNA polymerase subunit beta' (693 aa).

Cysteine 76, cysteine 78, cysteine 94, and cysteine 97 together coordinate Zn(2+). Aspartate 496, aspartate 498, and aspartate 500 together coordinate Mg(2+).

It belongs to the RNA polymerase beta' chain family. RpoC1 subfamily. In terms of assembly, in plastids the minimal PEP RNA polymerase catalytic core is composed of four subunits: alpha, beta, beta', and beta''. When a (nuclear-encoded) sigma factor is associated with the core the holoenzyme is formed, which can initiate transcription. It depends on Mg(2+) as a cofactor. Requires Zn(2+) as cofactor.

The protein localises to the plastid. It is found in the chloroplast. It catalyses the reaction RNA(n) + a ribonucleoside 5'-triphosphate = RNA(n+1) + diphosphate. DNA-dependent RNA polymerase catalyzes the transcription of DNA into RNA using the four ribonucleoside triphosphates as substrates. This Nuphar advena (Common spatterdock) protein is DNA-directed RNA polymerase subunit beta'.